We begin with the raw amino-acid sequence, 116 residues long: MSNVYDKAQELKQALAESEEFKALKSLHTQIDQDDIAKRLLENFRQLQLDLQQKQMQGVQITEEEAQKAQQQFELVQQHELISKLMEEEQRLSVVIGDLNRIITEPLEEIYGNPNE.

The protein belongs to the UPF0342 family.

The protein is UPF0342 protein BH1149 of Halalkalibacterium halodurans (strain ATCC BAA-125 / DSM 18197 / FERM 7344 / JCM 9153 / C-125) (Bacillus halodurans).